The primary structure comprises 245 residues: MKLFVYHTPELTPKDQVPDCAIAVDVLRATSTIATVLSAGGEAVQVFSDLDELIAVSETWPPQKRLRAGERGGGKVAGFELGNSPLDCTPELVEGRRLFISTTNGTRALKRVQDSATVLTAAFINRAAVVQYLLEKQPETVWIVGSGWEGSYSLEDTACAGAIAHSVVEKSQLPPEKLAGNDEVISAIALYSQWQDNLLGLLHHASHGQRLLRLECHEDLKYCSQTDVLTVLPIQQEAGVFKTKN.

Belongs to the ComB family. Requires Mg(2+) as cofactor.

It catalyses the reaction (2R)-O-phospho-3-sulfolactate + H2O = (2R)-3-sulfolactate + phosphate. The protein is Probable 2-phosphosulfolactate phosphatase of Trichormus variabilis (strain ATCC 29413 / PCC 7937) (Anabaena variabilis).